Reading from the N-terminus, the 1069-residue chain is ISWI chromatin-remodeling complex ATPase CHR17 (1069 aa).

Basic and acidic residues predominate over residues 1-10; that stretch reads MARASKREVS. 2 disordered regions span residues 1-93 and 136-168; these read MARA…KEMQ and FAKSDPSPSQKKGKGRGRHSSKLTEEEEDEECL. Acidic residues-rich tracts occupy residues 15-37 and 45-78; these read YSSEEEEQVNDQANVEEDDDELE and SDEEDVAPDEAPVSDDEVVPVEDDAEEDEEDEEK. Positions 79 to 93 are enriched in basic and acidic residues; the sequence is AEISKREKARLKEMQ. Basic residues predominate over residues 146 to 156; that stretch reads KKGKGRGRHSS. A Helicase ATP-binding domain is found at 206–371; sequence IRLYENGING…WALLNFLLPE (166 aa). 219 to 226 serves as a coordination point for ATP; that stretch reads DEMGLGKT. Residues 322 to 325 carry the DEAH box motif; sequence DEAH. One can recognise a Helicase C-terminal domain in the interval 499–650; sequence LLDKLLPKLK…ALVIQQGRLA (152 aa). 2 SANT domains span residues 845–897 and 946–1007; these read EGFS…VRYK and QNKG…DTLI. Residues 1016 to 1069 are disordered; it reads EFDERERQARKEKKLSKSATPSKRPSGRQANESPSSLLKKRKQLSMDDYGKRRK. Positions 1032 to 1051 are enriched in polar residues; it reads KSATPSKRPSGRQANESPSS. Residues 1059–1069 are compositionally biased toward basic and acidic residues; the sequence is LSMDDYGKRRK.

Belongs to the SNF2/RAD54 helicase family. ISWI subfamily. As to quaternary structure, interacts with RLT1. Binds to FGT1. As to expression, highly expressed in growing tissues such as inflorescence and flower meristems, young leaves and floral organs. Expressed in roots, rosette and cauline leaves, stems, flowers, inflorescences and siliques.

The protein resides in the nucleus. Its function is as follows. Possesses intrinsic ATP-dependent nucleosome-remodeling activity. Constitutes the catalytic subunit of several complexes capable of forming ordered nucleosome arrays on chromatin. Involved in the formation of nucleosome distribution patterns. Required for the maintenance of the plant vegetative phase. In association with RLT1 or RLT2 may prevent the early activation of the vegetative-to-reproductive transition by regulating key genes that contribute to flower timing, such as FT, SEP1, SEP3, AGL8/FUL, SOC1 and FLC. Necessary to acquire heat stress (HS) memory. This is ISWI chromatin-remodeling complex ATPase CHR17 from Arabidopsis thaliana (Mouse-ear cress).